The following is a 96-amino-acid chain: ATP-dependent Clp protease adapter protein ClpS (96 aa).

Belongs to the ClpS family. As to quaternary structure, binds to the N-terminal domain of the chaperone ClpA.

In terms of biological role, involved in the modulation of the specificity of the ClpAP-mediated ATP-dependent protein degradation. This Campylobacter jejuni subsp. jejuni serotype O:6 (strain 81116 / NCTC 11828) protein is ATP-dependent Clp protease adapter protein ClpS.